Consider the following 256-residue polypeptide: 6-carboxyhexanoate--CoA ligase (256 aa).

It belongs to the BioW family. As to quaternary structure, homodimer. It depends on Mg(2+) as a cofactor.

It carries out the reaction heptanedioate + ATP + CoA = 6-carboxyhexanoyl-CoA + AMP + diphosphate. It participates in metabolic intermediate metabolism; pimeloyl-CoA biosynthesis; pimeloyl-CoA from pimelate: step 1/1. Functionally, catalyzes the transformation of pimelate into pimeloyl-CoA with concomitant hydrolysis of ATP to AMP. This is 6-carboxyhexanoate--CoA ligase from Bacillus amyloliquefaciens (strain ATCC 23350 / DSM 7 / BCRC 11601 / CCUG 28519 / NBRC 15535 / NRRL B-14393 / F).